We begin with the raw amino-acid sequence, 551 residues long: Pentatricopeptide repeat-containing protein At3g13150 (551 aa).

The segment at 22–67 is disordered; it reads ATAKSAKPRSQTKSTKFPSKLKASTASVGDGGQSSNDAKDSKNSKL. Polar residues predominate over residues 29–48; the sequence is PRSQTKSTKFPSKLKASTAS. The segment covering 58 to 67 has biased composition (basic and acidic residues); that stretch reads DAKDSKNSKL. PPR repeat units follow at residues 121 to 155, 156 to 191, 192 to 226, 227 to 261, 262 to 296, 297 to 331, and 332 to 366; these read SEDFVIRIMLLYGYSGMAEHAHKLFDEMPELNCER, TVKSFNALLSAYVNSKKLDEAMKTFKELPEKLGITP, DLVTYNTMIKALCRKGSMDDILSIFEELEKNGFEP, DLISFNTLLEEFYRRELFVEGDRIWDLMKSKNLSP, NIRSYNSRVRGLTRNKKFTDALNLIDVMKTEGISP, DVHTYNALITAYRVDNNLEEVMKCYNEMKEKGLTP, and DTVTYCMLIPLLCKKGDLDRAVEVSEEAIKHKLLS. Disordered stretches follow at residues 409–435 and 449–551; these read GKKKTTSSPVSSSAKTTSTPVSSSPDT and SSSD…LLDD. Residues 415 to 435 show a composition bias toward low complexity; it reads SSPVSSSAKTTSTPVSSSPDT.

Belongs to the PPR family. P subfamily.

This Arabidopsis thaliana (Mouse-ear cress) protein is Pentatricopeptide repeat-containing protein At3g13150.